A 470-amino-acid chain; its full sequence is Uronate isomerase (470 aa).

Belongs to the metallo-dependent hydrolases superfamily. Uronate isomerase family.

The catalysed reaction is D-glucuronate = D-fructuronate. The enzyme catalyses aldehydo-D-galacturonate = keto-D-tagaturonate. It functions in the pathway carbohydrate metabolism; pentose and glucuronate interconversion. The sequence is that of Uronate isomerase from Serratia proteamaculans (strain 568).